Here is a 332-residue protein sequence, read N- to C-terminus: Putative peptide import ATP-binding protein BMEII0206 (332 aa).

One can recognise an ABC transporter domain in the interval 11-261 (LEVSNLSVDF…PLHPYTEGLL (251 aa)). 47 to 54 (GESGSGKS) is a binding site for ATP.

It belongs to the ABC transporter superfamily. As to quaternary structure, the complex is composed of two ATP-binding proteins (BMEII0205 and BMEII0206), two transmembrane proteins (BMEII0207/BMEII0208 and BMEII0209) and a solute-binding protein (BMEII0210).

Its subcellular location is the cell inner membrane. Probably part of an ABC transporter complex that could be involved in peptide import. Probably responsible for energy coupling to the transport system. This is Putative peptide import ATP-binding protein BMEII0206 from Brucella melitensis biotype 1 (strain ATCC 23456 / CCUG 17765 / NCTC 10094 / 16M).